The chain runs to 356 residues: Phospho-N-acetylmuramoyl-pentapeptide-transferase (356 aa).

A run of 10 helical transmembrane segments spans residues 25-45, 70-90, 93-113, 138-158, 164-184, 195-215, 232-252, 258-278, 284-304, and 333-353; these read TVAA…SIIS, GTPT…ALLW, LFNI…AIGF, FLVA…GLAL, YFIN…VGLG, GLAI…AYLS, VGEL…FLWF, AIFM…IVSV, IVLI…IIQV, and QIVV…LSTL.

The protein belongs to the glycosyltransferase 4 family. MraY subfamily. Requires Mg(2+) as cofactor.

The protein localises to the cell inner membrane. The enzyme catalyses UDP-N-acetyl-alpha-D-muramoyl-L-alanyl-gamma-D-glutamyl-meso-2,6-diaminopimeloyl-D-alanyl-D-alanine + di-trans,octa-cis-undecaprenyl phosphate = di-trans,octa-cis-undecaprenyl diphospho-N-acetyl-alpha-D-muramoyl-L-alanyl-D-glutamyl-meso-2,6-diaminopimeloyl-D-alanyl-D-alanine + UMP. It participates in cell wall biogenesis; peptidoglycan biosynthesis. In terms of biological role, catalyzes the initial step of the lipid cycle reactions in the biosynthesis of the cell wall peptidoglycan: transfers peptidoglycan precursor phospho-MurNAc-pentapeptide from UDP-MurNAc-pentapeptide onto the lipid carrier undecaprenyl phosphate, yielding undecaprenyl-pyrophosphoryl-MurNAc-pentapeptide, known as lipid I. This chain is Phospho-N-acetylmuramoyl-pentapeptide-transferase, found in Bartonella bacilliformis (strain ATCC 35685 / KC583 / Herrer 020/F12,63).